The sequence spans 708 residues: Elongation factor G (708 aa).

The region spanning 9–289 (MFTRNIGIMA…AVCAFLPSPE (281 aa)) is the tr-type G domain. GTP is bound by residues 18 to 25 (AHIDAGKT), 86 to 90 (DTPGH), and 140 to 143 (NKMD).

It belongs to the TRAFAC class translation factor GTPase superfamily. Classic translation factor GTPase family. EF-G/EF-2 subfamily.

It is found in the cytoplasm. Functionally, catalyzes the GTP-dependent ribosomal translocation step during translation elongation. During this step, the ribosome changes from the pre-translocational (PRE) to the post-translocational (POST) state as the newly formed A-site-bound peptidyl-tRNA and P-site-bound deacylated tRNA move to the P and E sites, respectively. Catalyzes the coordinated movement of the two tRNA molecules, the mRNA and conformational changes in the ribosome. The sequence is that of Elongation factor G from Parabacteroides distasonis (strain ATCC 8503 / DSM 20701 / CIP 104284 / JCM 5825 / NCTC 11152).